Consider the following 330-residue polypeptide: D-alanine--D-alanine ligase (330 aa).

Residues 120 to 326 (KLWYDALGIP…FKTFLQKAVL (207 aa)) enclose the ATP-grasp domain. 150 to 205 (AFKQWGGLFVKAACQGSSVGCYKVTSEAELSKAINDAFGYSQQVLVEKAVKPRELE) is a binding site for ATP. Asp-280, Glu-293, and Asn-295 together coordinate Mg(2+).

Belongs to the D-alanine--D-alanine ligase family. It depends on Mg(2+) as a cofactor. Mn(2+) is required as a cofactor.

It localises to the cytoplasm. It carries out the reaction 2 D-alanine + ATP = D-alanyl-D-alanine + ADP + phosphate + H(+). The protein operates within cell wall biogenesis; peptidoglycan biosynthesis. Functionally, cell wall formation. The chain is D-alanine--D-alanine ligase from Aliivibrio fischeri (strain ATCC 700601 / ES114) (Vibrio fischeri).